The primary structure comprises 184 residues: uncharacterized protein (184 aa).

Positions 130–149 (DKDDDKKKKKKDDKKDDPCN) are disordered.

Its subcellular location is the virion. This is an uncharacterized protein from Acanthamoeba polyphaga (Amoeba).